A 291-amino-acid chain; its full sequence is Pyridoxal 5'-phosphate synthase subunit PdxS (291 aa).

Residue D23 participates in D-ribose 5-phosphate binding. K80 (schiff-base intermediate with D-ribose 5-phosphate) is an active-site residue. G152 lines the D-ribose 5-phosphate pocket. R164 is a D-glyceraldehyde 3-phosphate binding site. Residues G213 and 234-235 contribute to the D-ribose 5-phosphate site; that span reads GS.

The protein belongs to the PdxS/SNZ family. As to quaternary structure, in the presence of PdxT, forms a dodecamer of heterodimers.

It catalyses the reaction aldehydo-D-ribose 5-phosphate + D-glyceraldehyde 3-phosphate + L-glutamine = pyridoxal 5'-phosphate + L-glutamate + phosphate + 3 H2O + H(+). Its pathway is cofactor biosynthesis; pyridoxal 5'-phosphate biosynthesis. Catalyzes the formation of pyridoxal 5'-phosphate from ribose 5-phosphate (RBP), glyceraldehyde 3-phosphate (G3P) and ammonia. The ammonia is provided by the PdxT subunit. Can also use ribulose 5-phosphate and dihydroxyacetone phosphate as substrates, resulting from enzyme-catalyzed isomerization of RBP and G3P, respectively. The chain is Pyridoxal 5'-phosphate synthase subunit PdxS from Clostridium acetobutylicum (strain ATCC 824 / DSM 792 / JCM 1419 / IAM 19013 / LMG 5710 / NBRC 13948 / NRRL B-527 / VKM B-1787 / 2291 / W).